The sequence spans 877 residues: Leucine--tRNA ligase (877 aa).

The 'HIGH' region motif lies at 43–53 (PYPSGRIHMGH). A 'KMSKS' region motif is present at residues 628-632 (KMSKS). Lysine 631 contacts ATP.

It belongs to the class-I aminoacyl-tRNA synthetase family.

The protein localises to the cytoplasm. The enzyme catalyses tRNA(Leu) + L-leucine + ATP = L-leucyl-tRNA(Leu) + AMP + diphosphate. In Brucella melitensis biotype 2 (strain ATCC 23457), this protein is Leucine--tRNA ligase.